The chain runs to 977 residues: Protein bric-a-brac 1 (977 aa).

Positions 1 to 97 are disordered; the sequence is MASAQAETNV…RSSSVASPSS (97 aa). Residues 34 to 43 are compositionally biased toward polar residues; the sequence is PKSNRSSPTQ. Positions 44–69 are enriched in basic and acidic residues; that stretch reads QEEKRIKSEDRTSPTGGAKDEDKESQ. The segment covering 80-97 has biased composition (low complexity); sequence SPVSSPQGRSSSVASPSS. The BTB domain occupies 127–192; it reads VDVTLACDGR…MYRGEINVSQ (66 aa). Disordered regions lie at residues 221–249, 281–348, 362–434, and 447–497; these read AAAA…HDRE, ERQQ…GSTV, DMPS…RFPL, and SGLG…ADDL. A compositionally biased stretch (basic and acidic residues) spans 316–330; that stretch reads ERMELEQKERERQRD. The span at 372–396 shows a compositional bias: low complexity; that stretch reads PLSRSSRPHSQSPQQQQAQQQGQLP. Gly residues predominate over residues 469–491; it reads GGGVGGGGVGGGGAGGVGSGGGS. Positions 559–611 constitute an HTH psq-type domain; the sequence is FRERGPLKSWRPETMAEAIFSVLKEGLSLSQAARKYDIPYPTFVLYANRVHNM. The H-T-H motif DNA-binding region spans 569-614; it reads RPETMAEAIFSVLKEGLSLSQAARKYDIPYPTFVLYANRVHNMLGP. The segment at residues 621 to 632 is a DNA-binding region (a.T hook); it reads DLRPKGRGRPQR. 2 disordered regions span residues 772-900 and 925-977; these read ASIS…LGDL and VGAS…TTSE. 4 stretches are compositionally biased toward low complexity: residues 804-816, 838-853, 862-872, and 925-966; these read MAVA…QQQA, QQQQ…GGHQ, ASSSSSASSSS, and VGAS…SSGG.

Leg imaginal disk at the central region of the tarsus and in eye antenna disk at the basal cylinder.

Its subcellular location is the nucleus. Probably acts as a transcriptional regulator. Required for the specification of the tarsal segment. Also involved in antenna development. This is Protein bric-a-brac 1 (bab1) from Drosophila melanogaster (Fruit fly).